Here is a 281-residue protein sequence, read N- to C-terminus: Proteasome subunit beta 2 (281 aa).

Residues 1–53 (MEANTRSTGRLPAAFLTPGSSSFMDFLSEHQPEILPGNRQLPPTQGVIEAPHG) constitute a propeptide, removed in mature form; by autocatalysis. T54 serves as the catalytic Nucleophile.

It belongs to the peptidase T1B family. The 20S proteasome core is composed of 14 alpha and 14 beta subunits that assemble into four stacked heptameric rings, resulting in a barrel-shaped structure. The two inner rings, each composed of seven catalytic beta subunits, are sandwiched by two outer rings, each composed of seven alpha subunits. The catalytic chamber with the active sites is on the inside of the barrel. Has a gated structure, the ends of the cylinder being occluded by the N-termini of the alpha-subunits. Is capped by the proteasome-associated ATPase, ARC.

The protein localises to the cytoplasm. It carries out the reaction Cleavage of peptide bonds with very broad specificity.. Its pathway is protein degradation; proteasomal Pup-dependent pathway. Its activity is regulated as follows. The formation of the proteasomal ATPase ARC-20S proteasome complex, likely via the docking of the C-termini of ARC into the intersubunit pockets in the alpha-rings, may trigger opening of the gate for substrate entry. Interconversion between the open-gate and close-gate conformations leads to a dynamic regulation of the 20S proteasome proteolysis activity. Its function is as follows. Component of the proteasome core, a large protease complex with broad specificity involved in protein degradation. The polypeptide is Proteasome subunit beta 2 (Streptomyces avermitilis (strain ATCC 31267 / DSM 46492 / JCM 5070 / NBRC 14893 / NCIMB 12804 / NRRL 8165 / MA-4680)).